We begin with the raw amino-acid sequence, 298 residues long: Probable 2-(5''-triphosphoribosyl)-3'-dephosphocoenzyme-A synthase 2 (298 aa).

It belongs to the CitG/MdcB family.

It carries out the reaction 3'-dephospho-CoA + ATP = 2'-(5''-triphospho-alpha-D-ribosyl)-3'-dephospho-CoA + adenine. The sequence is that of Probable 2-(5''-triphosphoribosyl)-3'-dephosphocoenzyme-A synthase 2 from Salmonella choleraesuis (strain SC-B67).